Here is a 199-residue protein sequence, read N- to C-terminus: Chaperone protein TorD (199 aa).

This sequence belongs to the TorD/DmsD family. TorD subfamily.

It localises to the cytoplasm. Functionally, involved in the biogenesis of TorA. Acts on TorA before the insertion of the molybdenum cofactor and, as a result, probably favors a conformation of the apoenzyme that is competent for acquiring the cofactor. The polypeptide is Chaperone protein TorD (Escherichia coli O7:K1 (strain IAI39 / ExPEC)).